The primary structure comprises 353 residues: 3-ketosteroid-9-alpha-monooxygenase, ferredoxin reductase component (353 aa).

Residues 8 to 117 (SHVLELQVAE…LAPSGTFVPK (110 aa)) enclose the FAD-binding FR-type domain. Residues 264–353 (ATAVVTLDGT…SDSVEVTYDE (90 aa)) form the 2Fe-2S ferredoxin-type domain. [2Fe-2S] cluster contacts are provided by cysteine 300, cysteine 305, cysteine 308, and cysteine 338.

As to quaternary structure, monomer. The two-component system 3-ketosteroid-9-alpha-monooxygenase is composed of an oxygenase component KshA and a reductase component KshB. Requires FAD as cofactor. The cofactor is [2Fe-2S] cluster.

The enzyme catalyses androsta-1,4-diene-3,17-dione + 2 reduced [2Fe-2S]-[ferredoxin] + O2 + 2 H(+) = 9alpha-hydroxyandrosta-1,4-diene-3,17-dione + 2 oxidized [2Fe-2S]-[ferredoxin] + H2O. It participates in lipid metabolism; steroid biosynthesis. Its function is as follows. Involved in the degradation of cholesterol. Catalyzes the introduction of a 9a-hydroxyl moiety into 1,4-androstadiene-3,17-dione (ADD) to yield the 9alpha-hydroxy-1,4-androstadiene-3,17-dione (9OHADD) intermediate which spontaneously form 3-hydroxy-9,10-seconandrost-1,3,5(10)-triene-9,17-dione (HSA) via the meta-cleavage of ring B with concomitant aromatization of ring A. The sequence is that of 3-ketosteroid-9-alpha-monooxygenase, ferredoxin reductase component (kshB) from Mycolicibacterium smegmatis (strain ATCC 700084 / mc(2)155) (Mycobacterium smegmatis).